Here is a 311-residue protein sequence, read N- to C-terminus: Malate dehydrogenase (311 aa).

NAD(+)-binding positions include 7–13 and D34; that span reads GAAGGIG. R81 and R87 together coordinate substrate. NAD(+) is bound by residues N94 and 117-119; that span reads ITN. 2 residues coordinate substrate: N119 and R153. H177 serves as the catalytic Proton acceptor. M227 contacts NAD(+).

It belongs to the LDH/MDH superfamily. MDH type 1 family. In terms of assembly, homodimer.

The enzyme catalyses (S)-malate + NAD(+) = oxaloacetate + NADH + H(+). Functionally, catalyzes the reversible oxidation of malate to oxaloacetate. This chain is Malate dehydrogenase, found in Aliivibrio fischeri (strain ATCC 700601 / ES114) (Vibrio fischeri).